The sequence spans 206 residues: MTDKLIGFYDPVRMKAERKTSETEIKLEMNLRGTGQYQFDTEIPFFEHMLSHISKHGLIDLNLWLRGDIEIDCHHSVEDTAILMGTTIHKQLGDKAGIFRYGHFTLTMDEVLTTVAVDLGGRYFFKYTGPELTGKFGIYDAELSLEFLQKLALNAKMNLHVVVHYGDNKHHVHESIFKALGKALRMAIAQDSAAAGAIPSTKGVLE.

Belongs to the imidazoleglycerol-phosphate dehydratase family.

It localises to the cytoplasm. The enzyme catalyses D-erythro-1-(imidazol-4-yl)glycerol 3-phosphate = 3-(imidazol-4-yl)-2-oxopropyl phosphate + H2O. Its pathway is amino-acid biosynthesis; L-histidine biosynthesis; L-histidine from 5-phospho-alpha-D-ribose 1-diphosphate: step 6/9. This is Imidazoleglycerol-phosphate dehydratase from Leptospira interrogans serogroup Icterohaemorrhagiae serovar copenhageni (strain Fiocruz L1-130).